We begin with the raw amino-acid sequence, 578 residues long: Sulfite reductase [NADPH] hemoprotein beta-component (578 aa).

Positions 441, 447, 487, and 491 each coordinate [4Fe-4S] cluster. Siroheme is bound at residue Cys491.

This sequence belongs to the nitrite and sulfite reductase 4Fe-4S domain family. Alpha(8)-beta(8). The alpha component is a flavoprotein, the beta component is a hemoprotein. Siroheme is required as a cofactor. The cofactor is [4Fe-4S] cluster.

It catalyses the reaction hydrogen sulfide + 3 NADP(+) + 3 H2O = sulfite + 3 NADPH + 4 H(+). Its pathway is sulfur metabolism; hydrogen sulfide biosynthesis; hydrogen sulfide from sulfite (NADPH route): step 1/1. Component of the sulfite reductase complex that catalyzes the 6-electron reduction of sulfite to sulfide. This is one of several activities required for the biosynthesis of L-cysteine from sulfate. In Vibrio vulnificus (strain YJ016), this protein is Sulfite reductase [NADPH] hemoprotein beta-component.